Reading from the N-terminus, the 146-residue chain is Putative calcium-binding protein CML19 (146 aa).

EF-hand domains lie at 3 to 38 (AATA…ALGE), 40 to 75 (MSAE…LEMG), 79 to 114 (ERCR…LGSH), and 115 to 146 (QGIE…MMDA). Ca(2+)-binding residues include Asp16, Asp18, Asp20, Lys22, Glu27, Asp53, Asp55, Asp57, and Glu64. Residues Asp128, Asp130, Asp132, and Glu139 each contribute to the Ca(2+) site.

Its function is as follows. Potential calcium sensor. In Oryza sativa subsp. japonica (Rice), this protein is Putative calcium-binding protein CML19 (CML19).